The following is an 852-amino-acid chain: Potassium voltage-gated channel subfamily KQT member 2 (852 aa).

The Cytoplasmic segment spans residues 1 to 90; it reads MVQKSRNGGV…LYNVLERPRG (90 aa). A Phosphoserine; by PKA modification is found at Ser52. A helical transmembrane segment spans residues 91–113; the sequence is WAFIYHAYVFLLVFSCLVLSVFS. The Extracellular segment spans residues 114-123; sequence TIKEYEKSSE. A helical transmembrane segment spans residues 124-145; that stretch reads GALYILEIVTIVVFGVEYFVRI. Residues 146–163 lie on the Cytoplasmic side of the membrane; it reads WAAGCCCRYRGWRGRLKF. Residues 164 to 183 traverse the membrane as a helical segment; the sequence is ARKPFCVIDIMVLIASIAVL. Residues 184–196 are Extracellular-facing; sequence AAGSQGNVFATSA. Residues 197–215 form a helical; Voltage-sensor membrane-spanning segment; sequence LRSLRFLQILRMIRMDRRG. Arg214 contacts a 1,2-diacyl-sn-glycero-3-phospho-(1D-myo-inositol-4,5-bisphosphate). Topologically, residues 216 to 227 are cytoplasmic; that stretch reads GTWKLLGSVVYA. Residues 222-323 are mediates interaction with SLC5A3; sequence GSVVYAHSKE…SGFALKVQEQ (102 aa). The chain crosses the membrane as a helical span at residues 228 to 253; that stretch reads HSKELVTAWYIGFLCLILASFLVYLA. Lys230 is an a 1,2-diacyl-sn-glycero-3-phospho-(1D-myo-inositol-4,5-bisphosphate) binding site. At 254–263 the chain is on the extracellular side; it reads EKGENDHFDT. The pore-forming intramembrane region spans 264-276; sequence YADALWWGLITLT. Residues 277–282 carry the Selectivity filter motif; it reads TIGYGD. Residues 277 to 287 are Extracellular-facing; it reads TIGYGDKYPQT. A helical membrane pass occupies residues 288–314; sequence WNGRLLAATFTLIGVSFFALPAGILGS. Residues 315–852 are Cytoplasmic-facing; the sequence is GFALKVQEQH…GDVAWAGPRK (538 aa). The interval 317–522 is mediates interaction with calmodulin; that stretch reads ALKVQEQHRQ…EDLTPGLKVS (206 aa). Position 327 (Lys327) interacts with a 1,2-diacyl-sn-glycero-3-phospho-(1D-myo-inositol-4,5-bisphosphate). The disordered stretch occupies residues 404–469; sequence TFRKEPQPEP…SKVPKSWSFG (66 aa). Residues 440 to 457 show a composition bias toward polar residues; that stretch reads PQAQTVRRSPSADQSLDD. Phosphoserine occurs at positions 448, 450, 454, 458, 460, and 489. 3 disordered regions span residues 579-601, 643-662, and 672-718; these read GPTI…EDPS, GAKE…SRDH, and IVRS…DHGS. Residues 583–592 show a composition bias toward basic and acidic residues; that stretch reads TDKDRTKGPA. Ser655 bears the Phosphoserine mark. A phosphoserine mark is found at Ser781 and Ser783. A disordered region spans residues 818–852; the sequence is ESDTDSDLCTPCGPPPRSATGEGPFGDVAWAGPRK.

This sequence belongs to the potassium channel family. KQT (TC 1.A.1.15) subfamily. Kv7.2/KCNQ2 sub-subfamily. Heterotetramer with KCNQ3; forms heterotetrameric M-channel responsible for the M-current. Homotetrameric; forms a functional homotetrameric channel resulting in the expression of a small M-current. Interacts with calmodulin; the interaction is calcium-independent, constitutive and participates in the proper assembly of a functional M-channel. May associate with KCNE2. Interacts with IQCJ-SCHIP1. Interacts (via the pore module) with SLC5A3/SMIT1; forms a coregulatory complex that alters ion selectivity, voltage dependence and gating kinetics of the channel. Interacts with AKAP5; the interaction may help KCNQ2 channel complex to retain calcium-bound calmodulin. KCNQ2/KCNQ3 heteromeric current can be increased by intracellular cyclic AMP, an effect that depends on phosphorylation of Ser-52 in the N-terminal region. In terms of processing, KCNQ2/KCNQ3 are ubiquitinated by NEDD4L. Ubiquitination leads to protein degradation. Degradation induced by NEDD4L is inhibited by USP36. In terms of tissue distribution, expressed in brain and sympathetic ganglia. In brain, expressed in cortex, hippocampus, and cerebellum. In sympathetic ganglia, expressed at lower levels in celiac ganglia and superior mesenteric ganglia than in superior cervical ganglia.

Its subcellular location is the cell membrane. The enzyme catalyses K(+)(in) = K(+)(out). It catalyses the reaction Rb(+)(in) = Rb(+)(out). The catalysed reaction is Cs(+)(in) = Cs(+)(out). It carries out the reaction Na(+)(in) = Na(+)(out). Phosphatidylinositol-4,5-bisphosphate (PIP2) potentiates the activation of KCNQ channels by enhancing the electro-mechanical coupling of the voltage-sensing domain (VSD) and the pore-forming domain (PD). In the closed state of the channel, PIP2 is anchored at the S2-S3 loop; upon channel activation, PIP2 interacts with the S4-S5 linker and is involved in channel gating. Calcium suppresses KCNQ2 and KCNQ2-KCNQ3 channel currents, with calcium-bound calmodulin inducing a change in channel configuration which leads to the reduction of channel affinity for PIP2 and subsequent current suppression. Functionally, pore-forming subunit of the voltage-gated potassium (Kv) M-channel which is responsible for the M-current, a key controller of neuronal excitability. M-channel is composed of pore-forming subunits KCNQ2 and KCNQ3 assembled as heterotetramers. The native M-current has a slowly activating and deactivating potassium conductance which plays a critical role in determining the subthreshold electrical excitability of neurons as well as the responsiveness to synaptic inputs. M-channel is selectively permeable in vitro to other cations besides potassium, in decreasing order of affinity K(+) &gt; Rb(+) &gt; Cs(+) &gt; Na(+). M-channel association with SLC5A3/SMIT1 alters channel ion selectivity, increasing Na(+) and Cs(+) permeation relative to K(+). Suppressed by activation of the muscarinic acetylcholine receptor CHRM1. This is Potassium voltage-gated channel subfamily KQT member 2 from Rattus norvegicus (Rat).